A 493-amino-acid polypeptide reads, in one-letter code: tRNA (uracil-5-)-methyltransferase homolog B (493 aa).

Residues 1–14 (MHNPRLFLSRAGFF) constitute a mitochondrion transit peptide. S-adenosyl-L-methionine is bound by residues Gln-312, Glu-362, and Asn-412. Cys-440 serves as the catalytic Nucleophile. Glu-486 functions as the Proton acceptor in the catalytic mechanism.

Belongs to the class I-like SAM-binding methyltransferase superfamily. RNA M5U methyltransferase family.

Its subcellular location is the mitochondrion matrix. The catalysed reaction is uridine(54) in tRNA + S-adenosyl-L-methionine = 5-methyluridine(54) in tRNA + S-adenosyl-L-homocysteine + H(+). It carries out the reaction a uridine in 12S rRNA + S-adenosyl-L-methionine = a 5-methyluridine in 12S rRNA + S-adenosyl-L-homocysteine + H(+). Functionally, mitochondrial S-adenosyl-L-methionine-dependent methyltransferase that catalyzes the formation of 5-methyl-uridine in tRNAs and 12S rRNA. Catalyzes the methylation of uridine at position 54 (m5U54) in all tRNAs. Specifically methylates the uridine in position 425 of 12S rRNA (m5U425). Does not affect RNA stability or mitochondrial translation. The chain is tRNA (uracil-5-)-methyltransferase homolog B from Mus musculus (Mouse).